The sequence spans 392 residues: NADH-quinone oxidoreductase subunit D (392 aa).

Belongs to the complex I 49 kDa subunit family. In terms of assembly, NDH-1 is composed of 14 different subunits. Subunits NuoB, C, D, E, F, and G constitute the peripheral sector of the complex.

It localises to the cell inner membrane. The enzyme catalyses a quinone + NADH + 5 H(+)(in) = a quinol + NAD(+) + 4 H(+)(out). Functionally, NDH-1 shuttles electrons from NADH, via FMN and iron-sulfur (Fe-S) centers, to quinones in the respiratory chain. The immediate electron acceptor for the enzyme in this species is believed to be ubiquinone. Couples the redox reaction to proton translocation (for every two electrons transferred, four hydrogen ions are translocated across the cytoplasmic membrane), and thus conserves the redox energy in a proton gradient. The protein is NADH-quinone oxidoreductase subunit D of Rhodospirillum rubrum (strain ATCC 11170 / ATH 1.1.1 / DSM 467 / LMG 4362 / NCIMB 8255 / S1).